Consider the following 331-residue polypeptide: GTP 3',8-cyclase (331 aa).

Residues 6–234 enclose the Radical SAM core domain; it reads PFNRKIDYLR…PATGKSHDGP (229 aa). R15 contacts GTP. [4Fe-4S] cluster contacts are provided by C22 and C26. Y28 is an S-adenosyl-L-methionine binding site. [4Fe-4S] cluster is bound at residue C29. R66 contributes to the GTP binding site. G70 lines the S-adenosyl-L-methionine pocket. S97 serves as a coordination point for GTP. S121 is an S-adenosyl-L-methionine binding site. Residue K158 coordinates GTP. Residue M192 coordinates S-adenosyl-L-methionine. Positions 258 and 261 each coordinate [4Fe-4S] cluster. 263-265 is a binding site for GTP; that stretch reads RVR. Residue C275 participates in [4Fe-4S] cluster binding.

Belongs to the radical SAM superfamily. MoaA family. Monomer and homodimer. The cofactor is [4Fe-4S] cluster.

It carries out the reaction GTP + AH2 + S-adenosyl-L-methionine = (8S)-3',8-cyclo-7,8-dihydroguanosine 5'-triphosphate + 5'-deoxyadenosine + L-methionine + A + H(+). It functions in the pathway cofactor biosynthesis; molybdopterin biosynthesis. In terms of biological role, catalyzes the cyclization of GTP to (8S)-3',8-cyclo-7,8-dihydroguanosine 5'-triphosphate. This is GTP 3',8-cyclase from Hydrogenovibrio crunogenus (strain DSM 25203 / XCL-2) (Thiomicrospira crunogena).